A 94-amino-acid polypeptide reads, in one-letter code: Venom peptide SjAPI (94 aa).

The signal sequence occupies residues 1 to 24 (MKWGALLCIFGFLAFCSVLDRGLG). A propeptide spanning residues 25–30 (WIPDIW) is cleaved from the precursor. Cystine bridges form between cysteine 33–cysteine 70, cysteine 43–cysteine 66, cysteine 47–cysteine 62, cysteine 51–cysteine 92, and cysteine 72–cysteine 86. The TIL domain occupies 33–92 (CSSKNEEFQQCGSSCPETCANHKNPEPKSCAAVCFVGCVCKPGFIRDDLKGSICVKPEDC). Positions 63–65 (AAV) are protease binding loop.

This sequence belongs to the serine protease inhibitor-like (TIL domain-containing) family. In terms of tissue distribution, expressed by the venom gland.

Its subcellular location is the secreted. Its function is as follows. Recombinant protein inhibits both alpha-chymotrypsin (Ki=97.1 nM) and elastase (Ki=3700 nM). This chain is Venom peptide SjAPI, found in Scorpiops jendeki (Scorpion).